Consider the following 223-residue polypeptide: MOB-like protein phocein (223 aa).

Residues 1–23 form a disordered region; the sequence is MTAATENRTVRRNGPGTKRADWN. Positions 92, 97, 169, and 174 each coordinate Zn(2+).

This sequence belongs to the MOB1/phocein family.

Its subcellular location is the cytoplasm. The protein resides in the perinuclear region. It is found in the membrane. The protein localises to the golgi apparatus. It localises to the golgi stack membrane. Functionally, may play a role in membrane trafficking, specifically in membrane budding reactions. The protein is MOB-like protein phocein of Caenorhabditis elegans.